A 169-amino-acid chain; its full sequence is S-ribosylhomocysteine lyase (169 aa).

3 residues coordinate Fe cation: His54, His58, and Cys129.

It belongs to the LuxS family. In terms of assembly, homodimer. Requires Fe cation as cofactor.

The catalysed reaction is S-(5-deoxy-D-ribos-5-yl)-L-homocysteine = (S)-4,5-dihydroxypentane-2,3-dione + L-homocysteine. Involved in the synthesis of autoinducer 2 (AI-2) which is secreted by bacteria and is used to communicate both the cell density and the metabolic potential of the environment. The regulation of gene expression in response to changes in cell density is called quorum sensing. Catalyzes the transformation of S-ribosylhomocysteine (RHC) to homocysteine (HC) and 4,5-dihydroxy-2,3-pentadione (DPD). In Actinobacillus pleuropneumoniae serotype 5b (strain L20), this protein is S-ribosylhomocysteine lyase.